The primary structure comprises 300 residues: ETS homologous factor (300 aa).

Positions 29-115 (STCNVSSGFF…SNLQHLKWNG (87 aa)) constitute a PNT domain. Residues 183–202 (ESPDMKKEQDPPAKCHTKKH) form a disordered region. Positions 185–195 (PDMKKEQDPPA) are enriched in basic and acidic residues. The ETS DNA-binding region spans 207-289 (THLWEFIRDI…DGRRLVYKFG (83 aa)).

Belongs to the ETS family.

It is found in the nucleus. Its function is as follows. Transcriptional activator that may play a role in regulating epithelial cell differentiation and proliferation. May act as a repressor for a specific subset of ETS/AP-1-responsive genes, and as a modulator of the nuclear response to mitogen-activated protein kinase signaling cascades. Binds to DNA sequences containing the consensus nucleotide core sequence GGAA. Involved in regulation of TNFRSF10B/DR5 expression through Ets-binding sequences on the TNFRSF10B/DR5 promoter. The protein is ETS homologous factor (EHF) of Pan paniscus (Pygmy chimpanzee).